Reading from the N-terminus, the 113-residue chain is UPF0122 protein LSEI_1603 (113 aa).

The protein belongs to the UPF0122 family.

Its function is as follows. Might take part in the signal recognition particle (SRP) pathway. This is inferred from the conservation of its genetic proximity to ftsY/ffh. May be a regulatory protein. This Lacticaseibacillus paracasei (strain ATCC 334 / BCRC 17002 / CCUG 31169 / CIP 107868 / KCTC 3260 / NRRL B-441) (Lactobacillus paracasei) protein is UPF0122 protein LSEI_1603.